A 533-amino-acid polypeptide reads, in one-letter code: Probable protein kinase UbiB (533 aa).

The chain crosses the membrane as a helical span at residues 24–44; sequence LILELPMLPWWLRLLGATLPW. The 369-residue stretch at 126–494 folds into the Protein kinase domain; that stretch reads RFEREPLASA…WKGSRHDWLG (369 aa). ATP-binding positions include 132 to 140 and K154; that span reads LASASVAQV. The active-site Proton acceptor is the D289. Residues 510 to 530 form a helical membrane-spanning segment; that stretch reads LGQQLEAWPAWVMLAGGVFLI.

This sequence belongs to the ABC1 family. UbiB subfamily.

The protein resides in the cell inner membrane. It participates in cofactor biosynthesis; ubiquinone biosynthesis [regulation]. Is probably a protein kinase regulator of UbiI activity which is involved in aerobic coenzyme Q (ubiquinone) biosynthesis. In Pseudomonas aeruginosa (strain ATCC 15692 / DSM 22644 / CIP 104116 / JCM 14847 / LMG 12228 / 1C / PRS 101 / PAO1), this protein is Probable protein kinase UbiB.